The sequence spans 137 residues: uncharacterized protein (137 aa).

Residues 1-21 (MFNRRVLFLSVFSCAVFMLSG) form the signal peptide. C22 carries the N-palmitoyl cysteine lipid modification. C22 is lipidated: S-diacylglycerol cysteine.

Its subcellular location is the membrane. This is an uncharacterized protein from Escherichia coli (strain K12).